A 266-amino-acid chain; its full sequence is Glucosamine-6-phosphate deaminase (266 aa).

D72 (proton acceptor; for enolization step) is an active-site residue. The For ring-opening step role is filled by D141. Catalysis depends on H143, which acts as the Proton acceptor; for ring-opening step. The active-site For ring-opening step is E148.

The protein belongs to the glucosamine/galactosamine-6-phosphate isomerase family. NagB subfamily. In terms of assembly, homohexamer.

The catalysed reaction is alpha-D-glucosamine 6-phosphate + H2O = beta-D-fructose 6-phosphate + NH4(+). It functions in the pathway amino-sugar metabolism; N-acetylneuraminate degradation; D-fructose 6-phosphate from N-acetylneuraminate: step 5/5. With respect to regulation, allosterically activated by N-acetylglucosamine 6-phosphate (GlcNAc6P). Catalyzes the reversible isomerization-deamination of glucosamine 6-phosphate (GlcN6P) to form fructose 6-phosphate (Fru6P) and ammonium ion. The chain is Glucosamine-6-phosphate deaminase from Salmonella typhimurium (strain LT2 / SGSC1412 / ATCC 700720).